We begin with the raw amino-acid sequence, 293 residues long: Energy-coupling factor transporter ATP-binding protein EcfA2 (293 aa).

Positions 3-246 (ITFQKVEHRY…ADELEKIGVD (244 aa)) constitute an ABC transporter domain. 40 to 47 (GHTGSGKS) is an ATP binding site.

This sequence belongs to the ABC transporter superfamily. Energy-coupling factor EcfA family. In terms of assembly, forms a stable energy-coupling factor (ECF) transporter complex composed of 2 membrane-embedded substrate-binding proteins (S component), 2 ATP-binding proteins (A component) and 2 transmembrane proteins (T component).

Its subcellular location is the cell membrane. Its function is as follows. ATP-binding (A) component of a common energy-coupling factor (ECF) ABC-transporter complex. Unlike classic ABC transporters this ECF transporter provides the energy necessary to transport a number of different substrates. The protein is Energy-coupling factor transporter ATP-binding protein EcfA2 of Bacillus cereus (strain ATCC 10987 / NRS 248).